A 442-amino-acid chain; its full sequence is Shufflon protein B (442 aa).

Residues 1–361 form a constant region region; it reads MKKYDRGWAS…TGAILSCQSG (361 aa). Positions 362 to 442 are variable region; it reads TWKSSSASIW…SYFMKITCLK (81 aa).

The sequence is that of Shufflon protein B from Escherichia coli.